Here is a 282-residue protein sequence, read N- to C-terminus: BTB/POZ domain-containing protein At3g56230 (282 aa).

Residues 40 to 50 (GSKEDRHDKSN) show a composition bias toward basic and acidic residues. The disordered stretch occupies residues 40-66 (GSKEDRHDKSNHNSTINNGSSISSSPL). Over residues 51–64 (HNSTINNGSSISSS) the composition is skewed to low complexity. Residues 111-181 (ADILLKPGDD…LYTGTLASDK (71 aa)) form the BTB domain.

Its pathway is protein modification; protein ubiquitination. Its function is as follows. May act as a substrate-specific adapter of an E3 ubiquitin-protein ligase complex (CUL3-RBX1-BTB) which mediates the ubiquitination and subsequent proteasomal degradation of target proteins. The polypeptide is BTB/POZ domain-containing protein At3g56230 (Arabidopsis thaliana (Mouse-ear cress)).